The following is a 143-amino-acid chain: Large ribosomal subunit protein uL11 (143 aa).

This sequence belongs to the universal ribosomal protein uL11 family. In terms of assembly, part of the ribosomal stalk of the 50S ribosomal subunit. Interacts with L10 and the large rRNA to form the base of the stalk. L10 forms an elongated spine to which L12 dimers bind in a sequential fashion forming a multimeric L10(L12)X complex. Post-translationally, one or more lysine residues are methylated.

Forms part of the ribosomal stalk which helps the ribosome interact with GTP-bound translation factors. The polypeptide is Large ribosomal subunit protein uL11 (Rhizorhabdus wittichii (strain DSM 6014 / CCUG 31198 / JCM 15750 / NBRC 105917 / EY 4224 / RW1) (Sphingomonas wittichii)).